The primary structure comprises 159 residues: 2-C-methyl-D-erythritol 2,4-cyclodiphosphate synthase (159 aa).

Asp-8 and His-10 together coordinate a divalent metal cation. 4-CDP-2-C-methyl-D-erythritol 2-phosphate-binding positions include 8 to 10 (DVH) and 34 to 35 (HS). Position 42 (His-42) interacts with a divalent metal cation. Residues 56 to 58 (DIG), 61 to 65 (FPDTD), 100 to 106 (AQAPKML), 132 to 135 (TTTE), Phe-139, and Arg-142 contribute to the 4-CDP-2-C-methyl-D-erythritol 2-phosphate site.

It belongs to the IspF family. Homotrimer. The cofactor is a divalent metal cation.

The catalysed reaction is 4-CDP-2-C-methyl-D-erythritol 2-phosphate = 2-C-methyl-D-erythritol 2,4-cyclic diphosphate + CMP. The protein operates within isoprenoid biosynthesis; isopentenyl diphosphate biosynthesis via DXP pathway; isopentenyl diphosphate from 1-deoxy-D-xylulose 5-phosphate: step 4/6. In terms of biological role, involved in the biosynthesis of isopentenyl diphosphate (IPP) and dimethylallyl diphosphate (DMAPP), two major building blocks of isoprenoid compounds. Catalyzes the conversion of 4-diphosphocytidyl-2-C-methyl-D-erythritol 2-phosphate (CDP-ME2P) to 2-C-methyl-D-erythritol 2,4-cyclodiphosphate (ME-CPP) with a corresponding release of cytidine 5-monophosphate (CMP). The protein is 2-C-methyl-D-erythritol 2,4-cyclodiphosphate synthase of Salmonella typhimurium (strain LT2 / SGSC1412 / ATCC 700720).